The following is a 457-amino-acid chain: ATP synthase subunit beta (457 aa).

147 to 154 (GGAGVGKT) is a binding site for ATP.

The protein belongs to the ATPase alpha/beta chains family. In terms of assembly, F-type ATPases have 2 components, CF(1) - the catalytic core - and CF(0) - the membrane proton channel. CF(1) has five subunits: alpha(3), beta(3), gamma(1), delta(1), epsilon(1). CF(0) has three main subunits: a(1), b(2) and c(9-12). The alpha and beta chains form an alternating ring which encloses part of the gamma chain. CF(1) is attached to CF(0) by a central stalk formed by the gamma and epsilon chains, while a peripheral stalk is formed by the delta and b chains.

Its subcellular location is the cell inner membrane. The catalysed reaction is ATP + H2O + 4 H(+)(in) = ADP + phosphate + 5 H(+)(out). In terms of biological role, produces ATP from ADP in the presence of a proton gradient across the membrane. The catalytic sites are hosted primarily by the beta subunits. The chain is ATP synthase subunit beta from Histophilus somni (strain 129Pt) (Haemophilus somnus).